A 444-amino-acid chain; its full sequence is Putative methylesterase 15, chloroplastic (444 aa).

Polar residues predominate over residues 1–27 (MGNSLRCISQEQDPNQKKPSSVVNGNS). 2 disordered regions span residues 1 to 36 (MGNS…RRLS) and 48 to 91 (PSLS…DSLI). The transit peptide at 1–58 (MGNSLRCISQEQDPNQKKPSSVVNGNSSEKHVRRLSLIPSFRRRTLLPSLSCSGSSTS) directs the protein to the chloroplast. Positions 53-63 (SGSSTSSTSKK) are enriched in low complexity. Residues 64-80 (GGIKTKKKIRERHHQEQ) are compositionally biased toward basic residues. Basic and acidic residues predominate over residues 81–90 (HHHDHEKDSL). An AB hydrolase-1 domain is found at 188-312 (FVLVHGGGFG…QPDSNYDLME (125 aa)). The active-site Acyl-ester intermediate is aspartate 262. Active-site charge relay system residues include aspartate 390 and histidine 418.

Belongs to the AB hydrolase superfamily. Methylesterase family.

Its subcellular location is the plastid. It is found in the chloroplast. Functionally, putative methylesterase. This is Putative methylesterase 15, chloroplastic from Arabidopsis thaliana (Mouse-ear cress).